The following is a 388-amino-acid chain: Processive diacylglycerol beta-glucosyltransferase (388 aa).

This sequence belongs to the glycosyltransferase 28 family. UgtP subfamily.

It is found in the cell membrane. It catalyses the reaction a 1,2-diacyl-3-O-(beta-D-glucopyranosyl)-sn-glycerol + UDP-alpha-D-glucose = a 1,2-diacyl-3-O-(beta-D-Glc-(1-&gt;6)-beta-D-Glc)-sn-glycerol + UDP + H(+). It carries out the reaction a 1,2-diacyl-3-O-(beta-D-Glc-(1-&gt;6)-beta-D-Glc)-sn-glycerol + UDP-alpha-D-glucose = a 1,2-diacyl-3-O-(beta-D-Glc-(1-&gt;6)-beta-D-Glc-(1-&gt;6)-beta-D-Glc)-sn-glycerol + UDP + H(+). The catalysed reaction is a 1,2-diacyl-sn-glycerol + UDP-alpha-D-glucose = a 1,2-diacyl-3-O-(beta-D-glucopyranosyl)-sn-glycerol + UDP + H(+). Its pathway is glycolipid metabolism; diglucosyl-diacylglycerol biosynthesis. In terms of biological role, processive glucosyltransferase involved in the biosynthesis of both the bilayer- and non-bilayer-forming membrane glucolipids. Is able to successively transfer up to three glucosyl residues to diacylglycerol (DAG), thereby catalyzing the formation of beta-monoglucosyl-DAG (3-O-(beta-D-glucopyranosyl)-1,2-diacyl-sn-glycerol), beta-diglucosyl-DAG (3-O-(beta-D-glucopyranosyl-beta-(1-&gt;6)-D-glucopyranosyl)-1,2-diacyl-sn-glycerol) and beta-triglucosyl-DAG (3-O-(beta-D-glucopyranosyl-beta-(1-&gt;6)-D-glucopyranosyl-beta-(1-&gt;6)-D-glucopyranosyl)-1,2-diacyl-sn-glycerol). Beta-diglucosyl-DAG is the predominant glycolipid found in Bacillales and is also used as a membrane anchor for lipoteichoic acid (LTA). The chain is Processive diacylglycerol beta-glucosyltransferase from Bacillus cereus (strain ATCC 10987 / NRS 248).